Reading from the N-terminus, the 170-residue chain is uncharacterized protein (170 aa).

This is an uncharacterized protein from Aquifex aeolicus (strain VF5).